Here is a 591-residue protein sequence, read N- to C-terminus: Oxaloacetate decarboxylase alpha chain (591 aa).

The Pyruvate carboxyltransferase domain occupies 3 to 263 (IAITDVVLRD…DTGLDILKLE (261 aa)). A Biotinyl-binding domain is found at 518–591 (PAGAGTPVTA…SVGDTLMTLA (74 aa)). N6-biotinyllysine is present on K557.

In terms of assembly, composed of three chains (alpha, beta, and gamma). Biotin is required as a cofactor.

The enzyme catalyses oxaloacetate + 2 Na(+)(in) + H(+) = pyruvate + 2 Na(+)(out) + CO2. Functionally, catalyzes the decarboxylation of oxaloacetate coupled to Na(+) translocation. This Salmonella typhimurium (strain LT2 / SGSC1412 / ATCC 700720) protein is Oxaloacetate decarboxylase alpha chain (oadA1).